We begin with the raw amino-acid sequence, 427 residues long: tRNA pseudouridine synthase Pus10 (427 aa).

The active-site Nucleophile is D240. Y306 and Y378 together coordinate substrate.

The protein belongs to the pseudouridine synthase Pus10 family.

It catalyses the reaction uridine(54) in tRNA = pseudouridine(54) in tRNA. It carries out the reaction uridine(55) in tRNA = pseudouridine(55) in tRNA. Functionally, responsible for synthesis of pseudouridine from uracil-54 and uracil-55 in the psi GC loop of transfer RNAs. This Halorubrum lacusprofundi (strain ATCC 49239 / DSM 5036 / JCM 8891 / ACAM 34) protein is tRNA pseudouridine synthase Pus10.